The following is a 90-amino-acid chain: Small ribosomal subunit protein bS16 (90 aa).

Belongs to the bacterial ribosomal protein bS16 family.

The protein is Small ribosomal subunit protein bS16 of Brevibacillus brevis (strain 47 / JCM 6285 / NBRC 100599).